We begin with the raw amino-acid sequence, 378 residues long: Decaprenyl-diphosphate synthase subunit 1 (378 aa).

Isopentenyl diphosphate contacts are provided by Lys-72, Arg-75, and His-130. Positions 137 and 141 each coordinate Mg(2+). Position 147 (Arg-147) interacts with isopentenyl diphosphate.

This sequence belongs to the FPP/GGPP synthase family. In terms of assembly, heterotetramer of 2 dps1 and 2 dlp1 subunits. Mg(2+) serves as cofactor.

Its subcellular location is the mitochondrion. The enzyme catalyses 7 isopentenyl diphosphate + (2E,6E)-farnesyl diphosphate = all-trans-decaprenyl diphosphate + 7 diphosphate. It participates in cofactor biosynthesis; ubiquinone biosynthesis. Supplies decaprenyl diphosphate, the precursor for the side chain of the isoprenoid quinones ubiquinone-10. The protein is Decaprenyl-diphosphate synthase subunit 1 (dps1) of Schizosaccharomyces pombe (strain 972 / ATCC 24843) (Fission yeast).